Reading from the N-terminus, the 1202-residue chain is Ribonuclease P protein component, mitochondrial (1202 aa).

Residues 1–122 (MAFKSFIYSK…NNNNNQHRYY (122 aa)) constitute a mitochondrion transit peptide. The tract at residues 109-134 (NYVNNNNNNQHRYYSTGPTLPTNQYD) is disordered. A compositionally biased stretch (polar residues) spans 118–134 (QHRYYSTGPTLPTNQYD).

In terms of assembly, consists of an RNA moiety (RPM1) and the protein component (RPM2). Both are necessary for full enzymatic activity.

It localises to the mitochondrion. The enzyme catalyses Endonucleolytic cleavage of RNA, removing 5'-extranucleotides from tRNA precursor.. Its function is as follows. Ribonuclease P generates mature tRNA molecules by cleaving their 5'-ends. The chain is Ribonuclease P protein component, mitochondrial (RPM2) from Saccharomyces cerevisiae (strain ATCC 204508 / S288c) (Baker's yeast).